The sequence spans 246 residues: Cytochrome c oxidase subunit 2 (246 aa).

Transmembrane regions (helical) follow at residues 31–51 (HMMY…YVMM) and 72–92 (IMWT…SFML). Residues His175, Cys210, Glu212, Cys214, His218, and Met221 each contribute to the Cu cation site. Glu212 is a Mg(2+) binding site.

This sequence belongs to the cytochrome c oxidase subunit 2 family. As to quaternary structure, component of the cytochrome c oxidase (complex IV, CIV), a multisubunit enzyme composed of a catalytic core of 3 subunits and several supernumerary subunits. The complex exists as a monomer or a dimer and forms supercomplexes (SCs) in the inner mitochondrial membrane with ubiquinol-cytochrome c oxidoreductase (cytochrome b-c1 complex, complex III, CIII). Cu cation serves as cofactor.

The protein resides in the mitochondrion inner membrane. The enzyme catalyses 4 Fe(II)-[cytochrome c] + O2 + 8 H(+)(in) = 4 Fe(III)-[cytochrome c] + 2 H2O + 4 H(+)(out). Component of the cytochrome c oxidase, the last enzyme in the mitochondrial electron transport chain which drives oxidative phosphorylation. The respiratory chain contains 3 multisubunit complexes succinate dehydrogenase (complex II, CII), ubiquinol-cytochrome c oxidoreductase (cytochrome b-c1 complex, complex III, CIII) and cytochrome c oxidase (complex IV, CIV), that cooperate to transfer electrons derived from NADH and succinate to molecular oxygen, creating an electrochemical gradient over the inner membrane that drives transmembrane transport and the ATP synthase. Cytochrome c oxidase is the component of the respiratory chain that catalyzes the reduction of oxygen to water. Electrons originating from reduced cytochrome c in the intermembrane space (IMS) are transferred via the dinuclear copper A center (CU(A)) of subunit 2 and heme A of subunit 1 to the active site in subunit 1, a binuclear center (BNC) formed by heme A3 and copper B (CU(B)). The BNC reduces molecular oxygen to 2 water molecules using 4 electrons from cytochrome c in the IMS and 4 protons from the mitochondrial matrix. The polypeptide is Cytochrome c oxidase subunit 2 (COX2) (Debaryomyces hansenii (strain ATCC 36239 / CBS 767 / BCRC 21394 / JCM 1990 / NBRC 0083 / IGC 2968) (Yeast)).